The following is a 311-amino-acid chain: HPr kinase/phosphorylase (311 aa).

Active-site residues include H139 and K160. 154–161 (GDSGVGKS) lines the ATP pocket. S161 lines the Mg(2+) pocket. The active-site Proton acceptor; for phosphorylation activity. Proton donor; for dephosphorylation activity is D178. An important for the catalytic mechanism of both phosphorylation and dephosphorylation region spans residues 202 to 211 (LEIRGIGIID). E203 lines the Mg(2+) pocket. The active site involves R244. The segment at 265-270 (PVKTGR) is important for the catalytic mechanism of dephosphorylation.

This sequence belongs to the HPrK/P family. As to quaternary structure, homohexamer. It depends on Mg(2+) as a cofactor.

It carries out the reaction [HPr protein]-L-serine + ATP = [HPr protein]-O-phospho-L-serine + ADP + H(+). It catalyses the reaction [HPr protein]-O-phospho-L-serine + phosphate + H(+) = [HPr protein]-L-serine + diphosphate. Functionally, catalyzes the ATP- as well as the pyrophosphate-dependent phosphorylation of a specific serine residue in HPr, a phosphocarrier protein of the phosphoenolpyruvate-dependent sugar phosphotransferase system (PTS). HprK/P also catalyzes the pyrophosphate-producing, inorganic phosphate-dependent dephosphorylation (phosphorolysis) of seryl-phosphorylated HPr (P-Ser-HPr). The two antagonistic activities of HprK/P are regulated by several intracellular metabolites, which change their concentration in response to the absence or presence of rapidly metabolisable carbon sources (glucose, fructose, etc.) in the growth medium. Therefore, by controlling the phosphorylation state of HPr, HPrK/P is a sensor enzyme that plays a major role in the regulation of carbon metabolism and sugar transport: it mediates carbon catabolite repression (CCR), and regulates PTS-catalyzed carbohydrate uptake and inducer exclusion. The chain is HPr kinase/phosphorylase from Levilactobacillus brevis (strain ATCC 367 / BCRC 12310 / CIP 105137 / JCM 1170 / LMG 11437 / NCIMB 947 / NCTC 947) (Lactobacillus brevis).